Consider the following 455-residue polypeptide: Beta-1,4-mannosyltransferase bre-3 (455 aa).

This sequence belongs to the glycosyltransferase 2 family. Endothelial cells.

The protein localises to the cytoplasm. The protein operates within protein modification; protein glycosylation. Glycosyltransferase with a proposed role in glycosphingolipid biosynthesis. Involved in susceptibility to pore-forming crystal toxins in conjunction with bre-1, bre-2, bre-4 and bre-5. Involved in resistance to the nematotoxic C.cinerea galectin Cgl2. Has a role in determining brood size. The protein is Beta-1,4-mannosyltransferase bre-3 (bre-3) of Caenorhabditis elegans.